The following is a 331-amino-acid chain: Phosphate acyltransferase (331 aa).

It belongs to the PlsX family. In terms of assembly, homodimer. Probably interacts with PlsY.

The protein resides in the cytoplasm. The catalysed reaction is a fatty acyl-[ACP] + phosphate = an acyl phosphate + holo-[ACP]. Its pathway is lipid metabolism; phospholipid metabolism. Functionally, catalyzes the reversible formation of acyl-phosphate (acyl-PO(4)) from acyl-[acyl-carrier-protein] (acyl-ACP). This enzyme utilizes acyl-ACP as fatty acyl donor, but not acyl-CoA. In Clostridium acetobutylicum (strain ATCC 824 / DSM 792 / JCM 1419 / IAM 19013 / LMG 5710 / NBRC 13948 / NRRL B-527 / VKM B-1787 / 2291 / W), this protein is Phosphate acyltransferase.